The sequence spans 128 residues: uncharacterized protein (128 aa).

The VOC domain maps to 5–128; it reads SIHHIAIICS…DQLPLELYEQ (124 aa). A divalent metal cation-binding residues include H8, E56, H77, and E124.

This is an uncharacterized protein from Bacillus subtilis (strain 168).